A 167-amino-acid polypeptide reads, in one-letter code: Protein-export protein SecB (167 aa).

This sequence belongs to the SecB family. Homotetramer, a dimer of dimers. One homotetramer interacts with 1 SecA dimer.

It is found in the cytoplasm. Its function is as follows. One of the proteins required for the normal export of preproteins out of the cell cytoplasm. It is a molecular chaperone that binds to a subset of precursor proteins, maintaining them in a translocation-competent state. It also specifically binds to its receptor SecA. The protein is Protein-export protein SecB of Idiomarina loihiensis (strain ATCC BAA-735 / DSM 15497 / L2-TR).